The chain runs to 395 residues: Putative pyridoxal phosphate-dependent acyltransferase (395 aa).

G110–F111 contacts pyridoxal 5'-phosphate. Position 135 (H135) interacts with substrate. Pyridoxal 5'-phosphate is bound by residues S185, D210 to H213, and T240 to K243. K243 carries the N6-(pyridoxal phosphate)lysine modification. T357 is a substrate binding site.

The protein belongs to the class-II pyridoxal-phosphate-dependent aminotransferase family. In terms of assembly, homodimer. Pyridoxal 5'-phosphate serves as cofactor.

The chain is Putative pyridoxal phosphate-dependent acyltransferase from Staphylococcus aureus (strain MRSA252).